The chain runs to 125 residues: MARLAGVDIPNEKRIEIALTYIFGVGRTRAKETLAATGINPDIRVKDLTDEQLITLRDYLEGNYKIEGDLRREIDADIRRKIQINCYQGQRHRKGLPVRGQRTKTNARTRKGPKRTVAGKKKATK.

Residues Gln90–Lys125 are disordered.

It belongs to the universal ribosomal protein uS13 family. In terms of assembly, part of the 30S ribosomal subunit. Forms a loose heterodimer with protein S19. Forms two bridges to the 50S subunit in the 70S ribosome.

In terms of biological role, located at the top of the head of the 30S subunit, it contacts several helices of the 16S rRNA. In the 70S ribosome it contacts the 23S rRNA (bridge B1a) and protein L5 of the 50S subunit (bridge B1b), connecting the 2 subunits; these bridges are implicated in subunit movement. Contacts the tRNAs in the A and P-sites. The protein is Small ribosomal subunit protein uS13 of Bifidobacterium adolescentis (strain ATCC 15703 / DSM 20083 / NCTC 11814 / E194a).